The sequence spans 461 residues: Probable ribonuclease FAU-1 (461 aa).

The S1 motif domain maps to 89–158; sequence GAVFYGEVTE…ARPSLATALR (70 aa).

Belongs to the FAU-1 family.

In terms of biological role, probable RNase involved in rRNA stability through maturation and/or degradation of precursor rRNAs. Binds to RNA in loop regions with AU-rich sequences. In Natronomonas pharaonis (strain ATCC 35678 / DSM 2160 / CIP 103997 / JCM 8858 / NBRC 14720 / NCIMB 2260 / Gabara) (Halobacterium pharaonis), this protein is Probable ribonuclease FAU-1.